Reading from the N-terminus, the 533-residue chain is Phosphatidylinositol 4-kinase gamma 8 (533 aa).

Residues 101-397 (GAQPLLLPSG…AVSGSDDDDD (297 aa)) form the PI3K/PI4K catalytic domain. The interval 107-113 (LPSGLGG) is G-loop. ATP is bound by residues 108–114 (PSGLGGA), K129, and 210–213 (QRFV). Positions 243 to 251 (LNLDRHAGN) are catalytic loop. Residues 276–302 (PIDHGLCLPECLDDPYFEWLNWPQASV) form an activation loop region. An ATP-binding site is contributed by D278.

Belongs to the PI3/PI4-kinase family. Type II PI4K subfamily.

It carries out the reaction a 1,2-diacyl-sn-glycero-3-phospho-(1D-myo-inositol) + ATP = a 1,2-diacyl-sn-glycero-3-phospho-(1D-myo-inositol 4-phosphate) + ADP + H(+). The phosphorylation of phosphatidylinositol (PI) to PI4P is the first committed step in the generation of phosphatidylinositol 4,5-bisphosphate (PIP2), a precursor of the second messenger inositol 1,4,5-trisphosphate (InsP3). This chain is Phosphatidylinositol 4-kinase gamma 8 (PI4KG8), found in Arabidopsis thaliana (Mouse-ear cress).